The primary structure comprises 245 residues: MSIPLYLYGIFPNTIPETLELEGLDKQPVHSQVVDEFCFLYSEARQEKYLASRRNLLTHEKVLEQTMHAGFRVLLPLRFGLVVKDWETIMSQLINPHKDQLNQLFQKLAGKREVSIKIFWDAKAELQTMMESHQDLKQQRDNMEGKKLSMEEVIQIGQLIEINLLARKQAVIEVFSQELNPFAQEIVVSDPMTEEMIYNAAFLIPWESESEFSERVEVIDQKFGDRLRIRYNNFTAPYTFAQLDS.

The protein belongs to the gas vesicle GvpF/GvpL family. Binds GvpA.

The protein resides in the gas vesicle. A minor component of the gas vesicle, may be involved in preventing GvpA aggregation during gas vesicle nucleation. Gas vesicles (GV) are hollow, gas filled proteinaceous nanostructures. During planktonic growth they allow positioning of the organism at a favorable depth for light or nutrient acquisition. In Dolichospermum flosaquae (Anabaena flos-aquae), this protein is Gas vesicle protein F.